We begin with the raw amino-acid sequence, 546 residues long: Sulfite oxidase, mitochondrial (546 aa).

The transit peptide at 1-80 (MLPRLYRSVA…YHDHRCRASQ (80 aa)) directs the protein to the mitochondrion. Residues 83–162 (PRIYSKEDVR…LAEYKIGELN (80 aa)) enclose the Cytochrome b5 heme-binding domain. His119 lines the heme b pocket. A Phosphoserine modification is found at Ser124. Residues His144, Gln146, and His148 each contribute to the heme b site. The segment at 166–175 (RMSPPLEASD) is hinge. Residues 176–402 (PYSNDPMRHP…YSHWQRRDYK (227 aa)) form a moco domain region. Residues 216 to 220 (FTRNH), Cys265, Asp323, His362, Arg367, and 378 to 380 (HVK) contribute to the Mo-molybdopterin site. The tract at residues 403-539 (GFSPSVDWDT…RGVLSNAWHR (137 aa)) is homodimerization.

In terms of assembly, homodimer. It depends on heme b as a cofactor. Requires Mo-molybdopterin as cofactor.

The protein resides in the mitochondrion intermembrane space. It catalyses the reaction sulfite + O2 + H2O = sulfate + H2O2. Its pathway is energy metabolism; sulfur metabolism. Functionally, catalyzes the oxidation of sulfite to sulfate, the terminal reaction in the oxidative degradation of sulfur-containing amino acids. The polypeptide is Sulfite oxidase, mitochondrial (Rattus norvegicus (Rat)).